The following is a 318-amino-acid chain: NADH-ubiquinone oxidoreductase chain 1 (318 aa).

8 helical membrane passes run 3-23 (LINV…LTLL), 69-89 (LMFT…WIPI), 100-120 (LGVL…LWSG), 135-155 (AVAQ…SIMM), 171-191 (HMWL…STLA), 223-243 (FFLA…ILFF), 253-273 (ELHT…FLWV), and 293-313 (FLPL…TFAG).

This sequence belongs to the complex I subunit 1 family.

It is found in the mitochondrion inner membrane. It catalyses the reaction a ubiquinone + NADH + 5 H(+)(in) = a ubiquinol + NAD(+) + 4 H(+)(out). Functionally, core subunit of the mitochondrial membrane respiratory chain NADH dehydrogenase (Complex I) that is believed to belong to the minimal assembly required for catalysis. Complex I functions in the transfer of electrons from NADH to the respiratory chain. The immediate electron acceptor for the enzyme is believed to be ubiquinone. This is NADH-ubiquinone oxidoreductase chain 1 (MT-ND1) from Dasypus novemcinctus (Nine-banded armadillo).